A 466-amino-acid chain; its full sequence is Glutamate--tRNA ligase (466 aa).

The 'HIGH' region motif lies at 10–20 (PSPTGFLHIGG). The 'KMSKS' region signature appears at 252–256 (KLSKR). ATP is bound at residue Lys255.

Belongs to the class-I aminoacyl-tRNA synthetase family. Glutamate--tRNA ligase type 1 subfamily. As to quaternary structure, monomer.

Its subcellular location is the cytoplasm. The enzyme catalyses tRNA(Glu) + L-glutamate + ATP = L-glutamyl-tRNA(Glu) + AMP + diphosphate. Catalyzes the attachment of glutamate to tRNA(Glu) in a two-step reaction: glutamate is first activated by ATP to form Glu-AMP and then transferred to the acceptor end of tRNA(Glu). The polypeptide is Glutamate--tRNA ligase (Mycoplasmopsis synoviae (strain 53) (Mycoplasma synoviae)).